The chain runs to 229 residues: Large ribosomal subunit protein uL1 (229 aa).

Belongs to the universal ribosomal protein uL1 family. Part of the 50S ribosomal subunit.

In terms of biological role, binds directly to 23S rRNA. The L1 stalk is quite mobile in the ribosome, and is involved in E site tRNA release. Its function is as follows. Protein L1 is also a translational repressor protein, it controls the translation of the L11 operon by binding to its mRNA. This is Large ribosomal subunit protein uL1 from Streptococcus equi subsp. zooepidemicus (strain MGCS10565).